The chain runs to 575 residues: G protein-coupled receptor kinase 4 (575 aa).

Residue M1 is modified to N-acetylmethionine. An N-terminal region spans residues 1–153 (MELENFMANT…DCAGVIYKYL (153 aa)). The 121-residue stretch at 51–171 (DFSSLCDQQP…QESTYYNRFL (121 aa)) folds into the RGS domain. The region spanning 186-448 (FRQYRVLGKG…ASAVKQHPIF (263 aa)) is the Protein kinase domain. Residues 192–200 (LGKGGFGEV) and K215 each bind ATP. D311 (proton acceptor) is an active-site residue. One can recognise an AGC-kinase C-terminal domain in the interval 449–514 (KDINFSRLEA…GCVTIPWQNE (66 aa)). A Phosphoserine modification is found at S484.

Belongs to the protein kinase superfamily. AGC Ser/Thr protein kinase family. GPRK subfamily. Interacts with DRD3. Post-translationally, palmitoylated. As to expression, isoform GRK4A is expressed in testis. Isoform GRK4B is heterogeneously distributed in the kidney, with 20-fold enrichment in the outer medulla. Has a widespread but low level of expression in tissues other than testis.

The protein resides in the cytoplasm. It localises to the cell cortex. The catalysed reaction is [G-protein-coupled receptor] + ATP = [G-protein-coupled receptor]-phosphate + ADP + H(+). Its activity is regulated as follows. Inhibited by heparin. Specifically phosphorylates the activated forms of G protein-coupled receptors. Plays an important role in the regulation of renal sodium handling and blood pressure. In Rattus norvegicus (Rat), this protein is G protein-coupled receptor kinase 4 (Grk4).